We begin with the raw amino-acid sequence, 353 residues long: S-adenosylmethionine:tRNA ribosyltransferase-isomerase (353 aa).

This sequence belongs to the QueA family. In terms of assembly, monomer.

It is found in the cytoplasm. The catalysed reaction is 7-aminomethyl-7-carbaguanosine(34) in tRNA + S-adenosyl-L-methionine = epoxyqueuosine(34) in tRNA + adenine + L-methionine + 2 H(+). Its pathway is tRNA modification; tRNA-queuosine biosynthesis. In terms of biological role, transfers and isomerizes the ribose moiety from AdoMet to the 7-aminomethyl group of 7-deazaguanine (preQ1-tRNA) to give epoxyqueuosine (oQ-tRNA). The protein is S-adenosylmethionine:tRNA ribosyltransferase-isomerase of Burkholderia vietnamiensis (strain G4 / LMG 22486) (Burkholderia cepacia (strain R1808)).